Here is a 29-residue protein sequence, read N- to C-terminus: Galanin (29 aa).

The residue at position 29 (Ala-29) is an Alanine amide.

This sequence belongs to the galanin family.

It localises to the secreted. Its function is as follows. Contracts smooth muscle of the gastrointestinal and genitourinary tract, regulates growth hormone release, modulates insulin release, and may be involved in the control of adrenal secretion. In Pelophylax ridibundus (Marsh frog), this protein is Galanin (gal).